Reading from the N-terminus, the 730-residue chain is MAAVAAEAAATAASPGEGGAGEAEPELEPIPGSEAGTPLPVTATEAAVPDGEADGRQSAPQADEQPLPPPPPPPPPGELADSSEAEEAKPPEPAAVPVSPPEQPPAAPEQPEDAPRPPPAPALVPPAGGDSAVSHLIPGSEVRVTLDHIIEDALVVSFRLGEKLFSGVLMDLSKRFGPHGIPVTVFPKREYKDKPDAMQLQSTTFQEGIEVKQEVNGAVPDDLSPVPPPERLWASKPPPLFHEGAPYPPPLFIRDTYNQSIPQPPPRKIKRPKRKMYREEPTSIMNAIKLRPRQVLCDKCKNSVVAEKKEIRKGSSDSSRYEDKKRRNDSVATVNKKLKTDHKVDGKNQNESQRRNTVVRVSSIAHSRGRVVKVSAQANTSKAQLNTKKVLQSKNMDHAKAREVLKIAKEKAQKKQSETSTSKTAHAKVHFTRRYQSPSSGSLPPRVRLKPQRYRNEENDSSLKTGLEKIRSGKLAPKPQSRCTSTRSAGEAPSEKPSPSEGPEESAGEVQDTSRVRVPGEQEELRMLGKKGSKSSISVYLTLNQETSDSSSASVCSIDSMDDLKSSNSECSSSESFVFPPGCMHAPSASSTSTSFSSKEENSLRNSLKMKIFSKNVSKCITPDGRTICVGDIVWAKIYGFPWWPARILTITVSRKDNGLLARQEARISWFASPTTSSLALSQLSPFLENFQLRFNKKRKGLYRRAITEAAKAAKQLTPEVRALLTQFET.

The segment covering 1–15 has biased composition (low complexity); it reads MAAVAAEAAATAASP. Residues 1–134 form a disordered region; sequence MAAVAAEAAA…PPAGGDSAVS (134 aa). The span at 66–77 shows a compositional bias: pro residues; the sequence is PLPPPPPPPPPG. A phosphoserine mark is found at Ser-82 and Ser-99. The segment covering 91 to 108 has biased composition (pro residues); sequence PEPAAVPVSPPEQPPAAP. An interaction with HDAC1 and MTA1 region spans residues 128–346; sequence GGDSAVSHLI…KLKTDHKVDG (219 aa). Lys-188 is covalently cross-linked (Glycyl lysine isopeptide (Lys-Gly) (interchain with G-Cter in SUMO2)). Disordered stretches follow at residues 257-276, 311-355, and 409-531; these read YNQS…KRKM, IRKG…SQRR, and KEKA…LGKK. The segment covering 267 to 276 has biased composition (basic residues); that stretch reads RKIKRPKRKM. Basic and acidic residues-rich tracts occupy residues 311–329 and 341–354; these read IRKG…RRND and DHKV…ESQR. An interaction with the H2A.Z/H2AZ1 region spans residues 396–547; that stretch reads MDHAKAREVL…SVYLTLNQET (152 aa). The segment covering 488 to 501 has biased composition (low complexity); the sequence is SAGEAPSEKPSPSE. Basic and acidic residues predominate over residues 512 to 527; that stretch reads DTSRVRVPGEQEELRM. The 61-residue stretch at 630–690 folds into the PWWP domain; sequence VGDIVWAKIY…LSQLSPFLEN (61 aa).

In terms of assembly, component of a MTA1-specific subcomplex of the NuRD complex (M1HR), which is composed of PWWP2A, MTA1/2, HDAC1/2, and RBBP4/7 but does not contain CHD4 and MBD3. Interacts with MTA1; the interaction mediates the association of PWWP2A with the M1HR complex. Interacts with H2A.Z/H2AZ1. Interacts (via PWWP domain) with histone H3 trimethylated at 'Lys-36' (H3K36me3). Does not interact with CHD4 and MBD3.

It is found in the nucleus. Its function is as follows. Chromatin-binding protein that acts as an adapter between distinct nucleosome components (H3K36me3 or H2A.Z) and chromatin-modifying complexes, contributing to the regulation of the levels of histone acetylation at actively transcribed genes. Competes with CHD4 and MBD3 for interaction with MTA1 to form a NuRD subcomplex, preventing the formation of full NuRD complex (containing CHD4 and MBD3), leading to recruitment of HDACs to gene promoters resulting in turn in the deacetylation of nearby H3K27 and H2A.Z. Plays a role in facilitating transcriptional elongation and repression of spurious transcription initiation through regulation of histone acetylation. Essential for proper mitosis progression. The chain is PWWP domain-containing protein 2A (Pwwp2a) from Mus musculus (Mouse).